Consider the following 330-residue polypeptide: N-acetyl-gamma-glutamyl-phosphate reductase (330 aa).

Residue cysteine 155 is part of the active site.

The protein belongs to the NAGSA dehydrogenase family. Type 1 subfamily.

The protein resides in the cytoplasm. It catalyses the reaction N-acetyl-L-glutamate 5-semialdehyde + phosphate + NADP(+) = N-acetyl-L-glutamyl 5-phosphate + NADPH + H(+). It functions in the pathway amino-acid biosynthesis; L-arginine biosynthesis; N(2)-acetyl-L-ornithine from L-glutamate: step 3/4. In terms of biological role, catalyzes the NADPH-dependent reduction of N-acetyl-5-glutamyl phosphate to yield N-acetyl-L-glutamate 5-semialdehyde. The sequence is that of N-acetyl-gamma-glutamyl-phosphate reductase from Shewanella halifaxensis (strain HAW-EB4).